The following is a 236-amino-acid chain: MSRYLLRDVQAVLRGVRKVAESSLKLETEKVSLRLGDFRSQPSLRSVPASLTSRSQAFSLQEIAARAGVVLRGVQQQFRNVTGVNAAPVVAFDNGSVLYSERIHSQSSQKQAPTTVPTGSVSNSPQPEGKANEAAERAKQFMNPPVAPMDPVDKNEFVAMPEMGRSNGNGENKQAADFMKNQGDTDMDSQYAPDSSKNTKSVPTKEIVAEDGSMSIEDIKKATQVTPGVAVKNEGV.

The N-terminal 73 residues, 1 to 73, are a transit peptide targeting the mitochondrion; sequence MSRYLLRDVQ…AARAGVVLRG (73 aa). 2 disordered regions span residues 102–135 and 165–209; these read RIHS…NEAA and RSNG…EIVA. Composition is skewed to polar residues over residues 105 to 126 and 192 to 202; these read SQSS…NSPQ and APDSSKNTKSV. Residues 126-143 carry the MAHS motif motif; the sequence is QPEGKANEAAERAKQFMN.

It localises to the mitochondrion. In terms of biological role, mitochondrial heat soluble protein acting as a molecular shield in water-deficient condition. The chain is Mitochondrial-abundant heat soluble protein from Ramazzottius varieornatus (Water bear).